A 129-amino-acid polypeptide reads, in one-letter code: Histone H2A.J (129 aa).

The disordered stretch occupies residues 1–22; sequence MSGRGKQGGKVRAKAKSRSSRA. Lys-6 and Lys-10 each carry N6-acetyllysine. The segment covering 7 to 19 has biased composition (basic residues); sequence QGGKVRAKAKSRS. Position 10 is an N6-lactoyllysine; alternate (Lys-10). N5-methylglutamine is present on Gln-105. The residue at position 121 (Thr-121) is a Phosphothreonine; by DCAF1.

Belongs to the histone H2A family. In terms of assembly, the nucleosome is a histone octamer containing two molecules each of H2A, H2B, H3 and H4 assembled in one H3-H4 heterotetramer and two H2A-H2B heterodimers. The octamer wraps approximately 147 bp of DNA. Monoubiquitination of Lys-120 (H2AXK119ub) gives a specific tag for epigenetic transcriptional repression. Following DNA double-strand breaks (DSBs), it is ubiquitinated through 'Lys-63' linkage of ubiquitin moieties. In terms of processing, glutamine methylation at Gln-105 (H2AQ104me) by FBL is specifically dedicated to polymerase I. It is present at 35S ribosomal DNA locus and impairs binding of the FACT complex. Post-translationally, phosphorylation on Ser-2 (H2AS1ph) is enhanced during mitosis. Phosphorylation on Ser-2 by RPS6KA5/MSK1 directly represses transcription. Acetylation of H3 inhibits Ser-2 phosphorylation by RPS6KA5/MSK1. Phosphorylation at Thr-121 (H2AT120ph) by DCAF1 is present in the regulatory region of many tumor suppresor genes and down-regulates their transcription.

The protein resides in the nucleus. It localises to the chromosome. Functionally, core component of nucleosome. Nucleosomes wrap and compact DNA into chromatin, limiting DNA accessibility to the cellular machineries which require DNA as a template. Histones thereby play a central role in transcription regulation, DNA repair, DNA replication and chromosomal stability. DNA accessibility is regulated via a complex set of post-translational modifications of histones, also called histone code, and nucleosome remodeling. The sequence is that of Histone H2A.J from Macaca fascicularis (Crab-eating macaque).